Here is a 62-residue protein sequence, read N- to C-terminus: Teretoxin Tsu1.1 (62 aa).

The N-terminal stretch at 1–21 (MSCFPVLFVMMLLASQSVWAF) is a signal peptide. The propeptide occupies 22-40 (PEPETRIGTARDAESMGVR).

The protein belongs to the teretoxin A (TA) superfamily. Post-translationally, contains 2 disulfide bonds. As to expression, expressed by the venom duct.

The protein resides in the secreted. The sequence is that of Teretoxin Tsu1.1 from Terebra subulata (Chocolate spotted auger).